A 283-amino-acid chain; its full sequence is Phosphatidylserine decarboxylase proenzyme (283 aa).

Catalysis depends on charge relay system; for autoendoproteolytic cleavage activity residues D88, H145, and S248. S248 acts as the Schiff-base intermediate with substrate; via pyruvic acid; for decarboxylase activity in catalysis. Pyruvic acid (Ser); by autocatalysis is present on S248.

This sequence belongs to the phosphatidylserine decarboxylase family. PSD-B subfamily. Prokaryotic type I sub-subfamily. Heterodimer of a large membrane-associated beta subunit and a small pyruvoyl-containing alpha subunit. It depends on pyruvate as a cofactor. Is synthesized initially as an inactive proenzyme. Formation of the active enzyme involves a self-maturation process in which the active site pyruvoyl group is generated from an internal serine residue via an autocatalytic post-translational modification. Two non-identical subunits are generated from the proenzyme in this reaction, and the pyruvate is formed at the N-terminus of the alpha chain, which is derived from the carboxyl end of the proenzyme. The autoendoproteolytic cleavage occurs by a canonical serine protease mechanism, in which the side chain hydroxyl group of the serine supplies its oxygen atom to form the C-terminus of the beta chain, while the remainder of the serine residue undergoes an oxidative deamination to produce ammonia and the pyruvoyl prosthetic group on the alpha chain. During this reaction, the Ser that is part of the protease active site of the proenzyme becomes the pyruvoyl prosthetic group, which constitutes an essential element of the active site of the mature decarboxylase.

Its subcellular location is the cell membrane. It catalyses the reaction a 1,2-diacyl-sn-glycero-3-phospho-L-serine + H(+) = a 1,2-diacyl-sn-glycero-3-phosphoethanolamine + CO2. The protein operates within phospholipid metabolism; phosphatidylethanolamine biosynthesis; phosphatidylethanolamine from CDP-diacylglycerol: step 2/2. Its function is as follows. Catalyzes the formation of phosphatidylethanolamine (PtdEtn) from phosphatidylserine (PtdSer). The protein is Phosphatidylserine decarboxylase proenzyme of Acidovorax ebreus (strain TPSY) (Diaphorobacter sp. (strain TPSY)).